We begin with the raw amino-acid sequence, 372 residues long: Cytoplasmic tRNA 2-thiolation protein 1 (372 aa).

Residues 335 to 372 (GKKEDGGCGSGGGGCGCAGAADETENEETRKRLKDLQF) form a disordered region. Positions 341 to 351 (GCGSGGGGCGC) are enriched in gly residues. Residues 361–372 (EETRKRLKDLQF) are compositionally biased toward basic and acidic residues.

This sequence belongs to the TtcA family. CTU1/NCS6/ATPBD3 subfamily.

The protein localises to the cytoplasm. The protein operates within tRNA modification; 5-methoxycarbonylmethyl-2-thiouridine-tRNA biosynthesis. Plays a central role in 2-thiolation of mcm(5)S(2)U at tRNA wobble positions of tRNA(Lys), tRNA(Glu) and tRNA(Gln). Directly binds tRNAs and probably acts by catalyzing adenylation of tRNAs, an intermediate required for 2-thiolation. It is unclear whether it acts as a sulfurtransferase that transfers sulfur from thiocarboxylated URM1 onto the uridine of tRNAs at wobble position. In Caenorhabditis briggsae, this protein is Cytoplasmic tRNA 2-thiolation protein 1.